The chain runs to 201 residues: 3-isopropylmalate dehydratase small subunit (201 aa).

Belongs to the LeuD family. LeuD type 1 subfamily. In terms of assembly, heterodimer of LeuC and LeuD.

It catalyses the reaction (2R,3S)-3-isopropylmalate = (2S)-2-isopropylmalate. The protein operates within amino-acid biosynthesis; L-leucine biosynthesis; L-leucine from 3-methyl-2-oxobutanoate: step 2/4. In terms of biological role, catalyzes the isomerization between 2-isopropylmalate and 3-isopropylmalate, via the formation of 2-isopropylmaleate. In Xanthobacter autotrophicus (strain ATCC BAA-1158 / Py2), this protein is 3-isopropylmalate dehydratase small subunit.